A 118-amino-acid chain; its full sequence is Ribonuclease P protein component (118 aa).

The protein belongs to the RnpA family. In terms of assembly, consists of a catalytic RNA component (M1 or rnpB) and a protein subunit.

It carries out the reaction Endonucleolytic cleavage of RNA, removing 5'-extranucleotides from tRNA precursor.. Functionally, RNaseP catalyzes the removal of the 5'-leader sequence from pre-tRNA to produce the mature 5'-terminus. It can also cleave other RNA substrates such as 4.5S RNA. The protein component plays an auxiliary but essential role in vivo by binding to the 5'-leader sequence and broadening the substrate specificity of the ribozyme. The polypeptide is Ribonuclease P protein component (Bifidobacterium animalis subsp. lactis (strain AD011)).